The chain runs to 149 residues: MNIRQAKTSDAAAIAPLFNQYREFYRQASDLQGAEAFLKARLENHESVILIAEENGEFIGFTQLYPTFSSVSMKRIYILNDLFVVPHARTKGAGGRLLSAAKDYAGQNGAKCLTLQTEHHNRKARSLYEQNGYEEDTGFVHYCLNVPAK.

The 149-residue stretch at 1–149 (MNIRQAKTSD…VHYCLNVPAK (149 aa)) folds into the N-acetyltransferase domain.

The protein belongs to the acetyltransferase family.

This is an uncharacterized protein from Bacillus subtilis (strain 168).